The chain runs to 237 residues: Germination-specific N-acetylmuramoyl-L-alanine amidase (237 aa).

An N-terminal signal peptide occupies residues 1–27 (MRKKLKWLSFLLGFIILLFLFKYQFSN). Residues 43 to 226 (IYLDPGHGGP…VASSIYKGIL (184 aa)) form the MurNAc-LAA domain.

Belongs to the N-acetylmuramoyl-L-alanine amidase 3 family.

The protein localises to the secreted. It catalyses the reaction Hydrolyzes the link between N-acetylmuramoyl residues and L-amino acid residues in certain cell-wall glycopeptides.. Its function is as follows. Cleaves the peptide side chain from the N-acetylmuramic acid residues in peptidoglycan. This is a step in the formation of muramic delta-lactam residues in spore cortex. This is Germination-specific N-acetylmuramoyl-L-alanine amidase (cwlD) from Bacillus subtilis (strain 168).